Here is a 157-residue protein sequence, read N- to C-terminus: Peptide methionine sulfoxide reductase MsrA (157 aa).

The active site involves Cys10.

Belongs to the MsrA Met sulfoxide reductase family.

It catalyses the reaction L-methionyl-[protein] + [thioredoxin]-disulfide + H2O = L-methionyl-(S)-S-oxide-[protein] + [thioredoxin]-dithiol. It carries out the reaction [thioredoxin]-disulfide + L-methionine + H2O = L-methionine (S)-S-oxide + [thioredoxin]-dithiol. Its function is as follows. Has an important function as a repair enzyme for proteins that have been inactivated by oxidation. Catalyzes the reversible oxidation-reduction of methionine sulfoxide in proteins to methionine. This is Peptide methionine sulfoxide reductase MsrA from Clostridium perfringens (strain 13 / Type A).